The primary structure comprises 293 residues: Non-homologous end joining protein Ku (293 aa).

The Ku domain maps to 10-195 (ISFGLVHIPV…KLDKRELEMA (186 aa)). The segment at 216-229 (SDKIMKLVEEKAAK) is required for dimerization. Residues 260-293 (RSRAGGGKDKGSEKAGADAKGRAKSGASRSRRKA) are disordered. A compositionally biased stretch (basic and acidic residues) spans 265–280 (GGKDKGSEKAGADAKG).

It belongs to the prokaryotic Ku family. Homodimer, may form higher-order multimers on DNA. Non-dimerized protein does not stimulate LigD ligase activity. Probably interacts with LigD.

In terms of biological role, with LigD forms a non-homologous end joining (NHEJ) DNA repair enzyme, which repairs dsDNA breaks with reduced fidelity. Stimulates rNTP addition to DSB and end joining (ligation) of linear DNA by LigD, on 3'-overhangs and probably also 5'-overhangs and blunt dsDNA breaks. Binds both ends of linear dsDNA protecting it from exonuclease activity. This is Non-homologous end joining protein Ku from Pseudomonas aeruginosa (strain ATCC 15692 / DSM 22644 / CIP 104116 / JCM 14847 / LMG 12228 / 1C / PRS 101 / PAO1).